The chain runs to 319 residues: MKPENKLPVLDLISAEMKTVVNTLQPDLPPWPATGTIAEQRQYYTLERRFWNVGAPEMATRAYRVPTKYGQVKTRIFYPQPDRPATLFYLHGGGFILGNLDTHDRIMRLLASYSQCTVIGIDYTLSPEARFPQAIEEIVAACCYFHQQAEDYQINMSRIGFAGDSAGAMLALASALWLRDKQIDCGKVAGVLLWYGLYGLRDSVTRRLLGGVWDGLTQQDLQMYEEAYLSNDADRESPYYCLFNNDLTREVPPCFIAGAEFDPLLDDSRLLYQTLAAHQQPCEFKLYPGTLHAFLHYSRMMKTADEALRDGAQFFTAQL.

The short motif at 91–93 is the Involved in the stabilization of the negatively charged intermediate by the formation of the oxyanion hole element; sequence HGG. Residues serine 165, aspartate 262, and histidine 292 contribute to the active site.

This sequence belongs to the 'GDXG' lipolytic enzyme family. As to quaternary structure, homodimer. Interacts with MalT and MelA.

It is found in the cytoplasm. Functionally, displays esterase activity towards short chain fatty esters (acyl chain length of up to 8 carbons). Able to hydrolyze triacetylglycerol (triacetin) and tributyrylglycerol (tributyrin), but not trioleylglycerol (triolein) or cholesterol oleate. Negatively regulates MalT activity by antagonizing maltotriose binding. Inhibits MelA galactosidase activity. The chain is Acetyl esterase from Escherichia coli O6:H1 (strain CFT073 / ATCC 700928 / UPEC).